Consider the following 279-residue polypeptide: MDKEVSELVVLQLIHTLISNKNEELVRNGGGINMIGNNLRISLVKLTNEIQNNLLINELTNLRRQSNVANGNRKLGINDILTIVKNLFPEYRTTLNDGQLSLHGLEMHDIEKLLDEKYDRFKKTQVEQIRMMEDEILKNGIKTGASQLQPHANAGKSGSAGTSATITTTTPHMAHSMDPKREKLLKLYRDTVLNKLESKTGNFQKLFKSPDGSIIKNEINYEDIKNETPGSVHELQLILQKSITDGVMRKVIGTDDWKLARQVQFELDDTVQFMRRALE.

The tract at residues Gln-147–Pro-179 is disordered. The span at Ala-154–Thr-170 shows a compositional bias: low complexity.

This sequence belongs to the EAF5 family. Component of the NuA4 histone acetyltransferase complex composed of at least ACT1, ARP4, YAF9, VID21, SWC4, EAF3, EAF5, EAF6, EAF7, EPL1, ESA1, TRA1 and YNG2.

It is found in the nucleus. Functionally, component of the NuA4 histone acetyltransferase complex which is involved in transcriptional activation of selected genes principally by acetylation of nucleosomal histone H4 and H2A. The NuA4 complex is also involved in DNA repair. This chain is Chromatin modification-related protein EAF5 (EAF5), found in Saccharomyces cerevisiae (strain ATCC 204508 / S288c) (Baker's yeast).